A 164-amino-acid chain; its full sequence is Phosphopantetheine adenylyltransferase (164 aa).

Serine 9 contacts substrate. ATP is bound by residues 9-10 (SF) and histidine 17. The substrate site is built by lysine 41, valine 78, and arginine 92. Residues 93–95 (GLR), glutamate 103, and 128–134 (VRTITAT) contribute to the ATP site.

The protein belongs to the bacterial CoaD family. In terms of assembly, homohexamer. Mg(2+) serves as cofactor.

It localises to the cytoplasm. The enzyme catalyses (R)-4'-phosphopantetheine + ATP + H(+) = 3'-dephospho-CoA + diphosphate. The protein operates within cofactor biosynthesis; coenzyme A biosynthesis; CoA from (R)-pantothenate: step 4/5. Reversibly transfers an adenylyl group from ATP to 4'-phosphopantetheine, yielding dephospho-CoA (dPCoA) and pyrophosphate. The chain is Phosphopantetheine adenylyltransferase from Brucella anthropi (strain ATCC 49188 / DSM 6882 / CCUG 24695 / JCM 21032 / LMG 3331 / NBRC 15819 / NCTC 12168 / Alc 37) (Ochrobactrum anthropi).